Consider the following 451-residue polypeptide: Probable gamma-glutamyl phosphate reductase (451 aa).

This sequence belongs to the gamma-glutamyl phosphate reductase family.

The catalysed reaction is L-glutamate 5-semialdehyde + phosphate + NADP(+) = L-glutamyl 5-phosphate + NADPH + H(+). It participates in amino-acid biosynthesis; L-proline biosynthesis; L-glutamate 5-semialdehyde from L-glutamate: step 2/2. Its function is as follows. Catalyzes the NADPH dependent reduction of L-gamma-glutamyl 5-phosphate into L-glutamate 5-semialdehyde and phosphate. The product spontaneously undergoes cyclization to form 1-pyrroline-5-carboxylate. The protein is Probable gamma-glutamyl phosphate reductase (pro1) of Schizosaccharomyces pombe (strain 972 / ATCC 24843) (Fission yeast).